The sequence spans 344 residues: Heat-inducible transcription repressor hrcA (344 aa).

Belongs to the HrcA family.

Functionally, negative regulator of class I heat shock genes (grpE-dnaK-dnaJ and groELS operons). Prevents heat-shock induction of these operons. The protein is Heat-inducible transcription repressor hrcA of Streptococcus pyogenes serotype M3 (strain ATCC BAA-595 / MGAS315).